The following is a 1366-amino-acid chain: MNYSFTERKRVRKSFAKRVNNHQVPYLIATQLESYAKFLQADKPAMSRLTEGLQAAFTSAFPIVSNNGYARMEYVSYQLSQPPFDVKECQQRGYTYHSALRAKVRLIIYDREAPTKVKEVKESEVYMGEIPLMTENGSFVINGTERVIVSQLHRSPGVFFEHDKGKTHSSGKLLFSARIIPYRGSWLDFEFDPKDILYFRVDRRRKMPVTILLKAIGLNNEQILANFFNFDHFSLTANGGSMEFVPERLRGQLANFDVLDKNGVVVIQKDKRINAKHIRELEAAKTKTIAVPDDYLVGRVVARNIVDPDSGEILAYANDEITEELLATLRDAGIKQLETIYTNDLDSGAYISQTLRTDETADQMAARIAIYRMMRPGEPPTEDAVEALFQRLFYNEDTYDLSRVGRMKVNSRLNRPEMEGPMVLSNEDILDTIKSLVDLRNGKGEVDDIDHLGNRRVRCVGELAENQFRAGLSRVERAVKERLGQAETENLMPHDLINSKPISSAIREFFGSSQLSQFMDQTNPLSEITHKRRISALGPGGLTRERAGFEVRDVHPTHYGRVCPIETPEGPNIGLINSLALFARLNEHGFLETPYRKVSNSKVSDEVVYLSAIEEAKYVIAQANATIDKSGKLADELVSARQAGETIMVSPERIDFIDVAPSQIVSAAASLVPFLEHDDANRALMGANMSRQAVPCLRPDKPLVGTGLERIVAVDSGTVILATRGGIVDYVDANRIVIRVNDDETAAGEVGVDIYNLIKYTRSNQNTNINQRPIVQAGDRVVRGDVVADGASTDLGELALGQNMTVAFMPWNGYNFEDSILISEKVVAEDRYTSIHIEELSVVARDTKLGSEEITRDISNLAESQLSRLDESGIVYIGAEVEAGDVLVGKVTPKGETTLTPEEKLLRAIFGEKASDVKDTSLRVPSGMIGTVIDVQVFTREGIERDARAQAIIQEELQRYRLDLNDQLRIVEGDAFMRLEKLLIGKVANGGPQKLAKGTKIDKEYLASLDKYHWFDVRPADEEVATQVEAIKSSIEAKRKQFDEAFEEKRTKLTQGDDLQAGVTKMVKVYLAVKRRLQPGDKMAGRHGNKGVVSKIAPAEDMPFMADGRPVDIVLNPLGVPSRMNVGQILETHLGWAAQGIGKRIDEMVRQQVKQAELRKFLKQLYNETGRIEDIDNFTDEQITVLAENLRQGLPFATPVFDGATEAEIGRMLELAYPEEVATSLKMTPSRQQMILCDGRTGDQFERPVTVGVMHVLKLHHLVDDKMHARSTGPYSLVTQQPLGGKAQFGGQRFGEMEVWALEAYGASYVLQEMLTVKSDDVAGRTKVYENIVKGEHTIDAGMPESFNVLVKEIRSLGIDIDMERN.

The protein belongs to the RNA polymerase beta chain family. The RNAP catalytic core consists of 2 alpha, 1 beta, 1 beta' and 1 omega subunit. When a sigma factor is associated with the core the holoenzyme is formed, which can initiate transcription.

The enzyme catalyses RNA(n) + a ribonucleoside 5'-triphosphate = RNA(n+1) + diphosphate. Its function is as follows. DNA-dependent RNA polymerase catalyzes the transcription of DNA into RNA using the four ribonucleoside triphosphates as substrates. The sequence is that of DNA-directed RNA polymerase subunit beta from Polynucleobacter asymbioticus (strain DSM 18221 / CIP 109841 / QLW-P1DMWA-1) (Polynucleobacter necessarius subsp. asymbioticus).